Here is a 208-residue protein sequence, read N- to C-terminus: High frequency lysogenization protein HflD homolog (208 aa).

The protein belongs to the HflD family.

The protein localises to the cytoplasm. Its subcellular location is the cell inner membrane. This chain is High frequency lysogenization protein HflD homolog, found in Edwardsiella ictaluri (strain 93-146).